The primary structure comprises 571 residues: MRTSQFLLSTLKETPSDAVVISHQLMLRAGMIRKLASGLYTWLPMGLRVLRKVENVVREEMNAAGALEVLMPAIQPAELWQESGRWVQYGPELLRVKDRHEREFCVGPTHEEVITDLARNELNSYKQLPINMYQIQTKFRDEIRPRFGLMRGREFIMKDAYSFHADQASLQETYDRMHQAYCNVFSRLGLNFRPVQADTGSIGGTGSHEFHVLAESGEDDIAFSNVSDYAANIEKAEAVPREKERAAATEDMRLVDTPNTKTIDALVQGFGLAIEKTIKTLVVHAAEEGKLIALIVRGDHELNEIKAANLEQVASPLQMASEAEIRAAIGAGPGSLGPVNLPIPCIVDRSVALMSDFASGANIEDKHYFGVNWERDLPLPTVADLRNVVAGDPSPDGQGTLEIKRGIEVGHIFQLGTKYSEAMNCQVLGENGKPVTLTMGCYGIGVSRVVAAAIEQNHDERGILWNDALAPFHIALVPLRYETEQVREATDKLYAELTAAGYEVLLDDRDKKTSPGIKFADMELIGIPHRVVVSDRGLAEGNLEYKSRAETEAQAVPLAEILPFLQARISR.

The protein belongs to the class-II aminoacyl-tRNA synthetase family. ProS type 1 subfamily. Homodimer.

It is found in the cytoplasm. It catalyses the reaction tRNA(Pro) + L-proline + ATP = L-prolyl-tRNA(Pro) + AMP + diphosphate. In terms of biological role, catalyzes the attachment of proline to tRNA(Pro) in a two-step reaction: proline is first activated by ATP to form Pro-AMP and then transferred to the acceptor end of tRNA(Pro). As ProRS can inadvertently accommodate and process non-cognate amino acids such as alanine and cysteine, to avoid such errors it has two additional distinct editing activities against alanine. One activity is designated as 'pretransfer' editing and involves the tRNA(Pro)-independent hydrolysis of activated Ala-AMP. The other activity is designated 'posttransfer' editing and involves deacylation of mischarged Ala-tRNA(Pro). The misacylated Cys-tRNA(Pro) is not edited by ProRS. The sequence is that of Proline--tRNA ligase from Ectopseudomonas mendocina (strain ymp) (Pseudomonas mendocina).